Reading from the N-terminus, the 746-residue chain is MQAKKRYFILLSAGSCLALLFYFGGVQFRASRSHSRREEHSGRNGLHQPSPDHFWPRFADALHPFFPWDQLENEDSGVHVSPRQKRDANSSVYKGKKCRMESCFDFALCKKNGFKVYVYPQQKGEKIAESYQNILAAIEGSRFYTSDPSQACLFVLSLDTLDRDQLSPQYVHNLRSKVQSLHLWNNGRNHLIFNLYSGTWPDYTEDVGFDIGQAMLAKASISTENFRPNFDVSIPLFSKDHPRTGGERGFLKFNTIPPLRKYMLVFKGKRYLTGIGSDTRNALYHVHNGEDVLLLTTCKHGKDWQKHKDSRCDRDNTEYEKYDYREMLHNATFCLVPRGRRLGSFRFLEALQAACVPVMLSNGWELPFSEVINWNQAAVIGDERLLLQIPSTIRSIHQDKILALRQQTQFLWEAYFSSVEKIVLTTLEIIQDRIFKHISRNSLIWNKHPGGLFVLPQYSSYLGDFPYYYANLGLKPPSKFTAVIHAVTPLVSQSQPVLKLLVAAAKSQYCAQIIVLWNCDKPLPAKHRWPATAVPVIVIEGESKVMSSRFLPYDNIITDAVLSLDEDTVLSTTEVDFAFTVWQSFPERIVGYPARSHFWDNSKERWGYTSKWTNDYSMVLTGAAIYHKYYHYLYTHYLPASLKNMVDQLANCEDILMNFLVSAVTKLPPIKVTQKKQYKETMMGQTSRASRWADPDHFAQRQSCMNTFASWFGYMPLIHSQMRLDPVLFKDQVSILRKKYRDIERL.

Topologically, residues 1–5 (MQAKK) are cytoplasmic. Residues 6–26 (RYFILLSAGSCLALLFYFGGV) form a helical; Signal-anchor for type II membrane protein membrane-spanning segment. Residues 27–746 (QFRASRSHSR…RKKYRDIERL (720 aa)) are Lumenal-facing. An N-linked (GlcNAc...) asparagine glycan is attached at N89. Cystine bridges form between C98–C103 and C109–C152. A protein-binding residues include L166 and Y203. The UDP site is built by K267, K269, Y271, and R280. A disulfide bridge connects residues C298 and C312. H300 serves as a coordination point for a protein. Residues Y319 and Y324 each contribute to the UDP site. The N-linked (GlcNAc...) asparagine glycan is linked to N330. Disulfide bonds link C334–C355 and C652–C704. Residues R346 and E349 each coordinate UDP.

Belongs to the glycosyltransferase 47 family. In terms of assembly, part of the heparan sulfate polymerase, a dimeric complex composed of EXT1 and EXT2. Could also form homooligomeric complexes. Interacts with NDST1. Post-translationally, N-glycosylated.

It localises to the golgi apparatus membrane. The protein localises to the golgi apparatus. Its subcellular location is the cis-Golgi network membrane. The protein resides in the endoplasmic reticulum membrane. It carries out the reaction 3-O-{alpha-D-GlcNAc-[(1-&gt;4)-beta-D-GlcA-(1-&gt;4)-alpha-D-GlcNAc](n)-(1-&gt;4)-beta-D-GlcA-(1-&gt;3)-beta-D-Gal-(1-&gt;3)-beta-D-Gal-(1-&gt;4)-beta-D-Xyl}-L-seryl-[protein] + UDP-alpha-D-glucuronate = 3-O-{[(1-&gt;4)-beta-D-GlcA-(1-&gt;4)-alpha-D-GlcNAc](n+1)-(1-&gt;4)-beta-D-GlcA-(1-&gt;3)-beta-D-Gal-(1-&gt;3)-beta-D-Gal-(1-&gt;4)-beta-D-Xyl}-L-seryl-[protein] + UDP + H(+). It participates in protein modification; protein glycosylation. Functionally, glycosyltransferase forming with EXT2 the heterodimeric heparan sulfate polymerase which catalyzes the elongation of the heparan sulfate glycan backbone. Glycan backbone extension consists in the alternating transfer of (1-&gt;4)-beta-D-GlcA and (1-&gt;4)-alpha-D-GlcNAc residues from their respective UDP-sugar donors. Both EXT1 and EXT2 are required for the full activity of the polymerase since EXT1 bears the N-acetylglucosaminyl-proteoglycan 4-beta-glucuronosyltransferase activity within the complex while EXT2 carries the glucuronosyl-N-acetylglucosaminyl-proteoglycan 4-alpha-N-acetylglucosaminyltransferase activity. Heparan sulfate proteoglycans are ubiquitous components of the extracellular matrix and play an important role in tissue homeostasis and signaling. This chain is Exostosin-1, found in Cricetulus griseus (Chinese hamster).